A 222-amino-acid polypeptide reads, in one-letter code: Putative N-acetylmannosamine-6-phosphate 2-epimerase (222 aa).

It belongs to the NanE family.

It carries out the reaction an N-acyl-D-glucosamine 6-phosphate = an N-acyl-D-mannosamine 6-phosphate. Its pathway is amino-sugar metabolism; N-acetylneuraminate degradation; D-fructose 6-phosphate from N-acetylneuraminate: step 3/5. Functionally, converts N-acetylmannosamine-6-phosphate (ManNAc-6-P) to N-acetylglucosamine-6-phosphate (GlcNAc-6-P). The protein is Putative N-acetylmannosamine-6-phosphate 2-epimerase of Staphylococcus aureus (strain bovine RF122 / ET3-1).